An 82-amino-acid polypeptide reads, in one-letter code: Transcription elongation factor 1 homolog (82 aa).

Zn(2+) is bound by residues Cys-26, Cys-29, Cys-50, and Cys-53.

It belongs to the ELOF1 family.

The protein localises to the nucleus. Functionally, transcription elongation factor implicated in the maintenance of proper chromatin structure in actively transcribed regions. The sequence is that of Transcription elongation factor 1 homolog from Drosophila melanogaster (Fruit fly).